The primary structure comprises 218 residues: Deoxyribose-phosphate aldolase (218 aa).

The Proton donor/acceptor role is filled by aspartate 89. Lysine 152 (schiff-base intermediate with acetaldehyde) is an active-site residue. Lysine 182 serves as the catalytic Proton donor/acceptor.

Belongs to the DeoC/FbaB aldolase family. DeoC type 1 subfamily.

It is found in the cytoplasm. The enzyme catalyses 2-deoxy-D-ribose 5-phosphate = D-glyceraldehyde 3-phosphate + acetaldehyde. It functions in the pathway carbohydrate degradation; 2-deoxy-D-ribose 1-phosphate degradation; D-glyceraldehyde 3-phosphate and acetaldehyde from 2-deoxy-alpha-D-ribose 1-phosphate: step 2/2. In terms of biological role, catalyzes a reversible aldol reaction between acetaldehyde and D-glyceraldehyde 3-phosphate to generate 2-deoxy-D-ribose 5-phosphate. The polypeptide is Deoxyribose-phosphate aldolase (Corynebacterium diphtheriae (strain ATCC 700971 / NCTC 13129 / Biotype gravis)).